The primary structure comprises 167 residues: MAKNNESPKKEREKAESDLTEKVLHINRCSKVVKGGRKFSFSALILVGDGKGRIGYGFAKANELTDAIRKGGEAARKNMISCPTEGTTIPHEVTVQWDGASVLLKPAPFGTGVIAGSKVRAVLELAGIKDVMAKNLGSSNPINQVKATFQAIQQLLTRDEIKQRRGV.

The S5 DRBM domain maps to 19 to 82; that stretch reads LTEKVLHINR…EAARKNMISC (64 aa).

It belongs to the universal ribosomal protein uS5 family. Part of the 30S ribosomal subunit. Contacts proteins S4 and S8.

Functionally, with S4 and S12 plays an important role in translational accuracy. In terms of biological role, located at the back of the 30S subunit body where it stabilizes the conformation of the head with respect to the body. This Protochlamydia amoebophila (strain UWE25) protein is Small ribosomal subunit protein uS5.